The sequence spans 107 residues: Thiosulfate sulfurtransferase GlpE (107 aa).

One can recognise a Rhodanese domain in the interval Lys-19 to Lys-107. Catalysis depends on Cys-67, which acts as the Cysteine persulfide intermediate.

This sequence belongs to the GlpE family.

It is found in the cytoplasm. The enzyme catalyses thiosulfate + hydrogen cyanide = thiocyanate + sulfite + 2 H(+). It carries out the reaction thiosulfate + [thioredoxin]-dithiol = [thioredoxin]-disulfide + hydrogen sulfide + sulfite + 2 H(+). Transferase that catalyzes the transfer of sulfur from thiosulfate to thiophilic acceptors such as cyanide or dithiols. May function in a CysM-independent thiosulfate assimilation pathway by catalyzing the conversion of thiosulfate to sulfite, which can then be used for L-cysteine biosynthesis. In Aliivibrio salmonicida (strain LFI1238) (Vibrio salmonicida (strain LFI1238)), this protein is Thiosulfate sulfurtransferase GlpE.